Reading from the N-terminus, the 433-residue chain is Probable M18 family aminopeptidase 2 (433 aa).

Residues histidine 84, histidine 161, and histidine 409 each contribute to the Zn(2+) site.

This sequence belongs to the peptidase M18 family. It depends on Zn(2+) as a cofactor.

The polypeptide is Probable M18 family aminopeptidase 2 (Clostridium novyi (strain NT)).